The sequence spans 213 residues: NADH-quinone oxidoreductase subunit I (213 aa).

4Fe-4S ferredoxin-type domains lie at 74-103 (RFIE…METS) and 113-142 (GNYS…HGTE). Residues Cys-83, Cys-86, Cys-89, Cys-93, Cys-122, Cys-125, Cys-128, and Cys-132 each contribute to the [4Fe-4S] cluster site.

It belongs to the complex I 23 kDa subunit family. NDH-1 is composed of 14 different subunits. Subunits NuoA, H, J, K, L, M, N constitute the membrane sector of the complex. Requires [4Fe-4S] cluster as cofactor.

It is found in the cell inner membrane. It carries out the reaction a quinone + NADH + 5 H(+)(in) = a quinol + NAD(+) + 4 H(+)(out). Its function is as follows. NDH-1 shuttles electrons from NADH, via FMN and iron-sulfur (Fe-S) centers, to quinones in the respiratory chain. The immediate electron acceptor for the enzyme in this species is believed to be ubiquinone. Couples the redox reaction to proton translocation (for every two electrons transferred, four hydrogen ions are translocated across the cytoplasmic membrane), and thus conserves the redox energy in a proton gradient. The sequence is that of NADH-quinone oxidoreductase subunit I from Campylobacter jejuni subsp. jejuni serotype O:6 (strain 81116 / NCTC 11828).